The chain runs to 281 residues: Pantothenate synthetase (281 aa).

30-37 (MGYLHEGH) lines the ATP pocket. H37 acts as the Proton donor in catalysis. Q61 provides a ligand contact to (R)-pantoate. Residue Q61 participates in beta-alanine binding. Position 147-150 (147-150 (GQKD)) interacts with ATP. Residue Q153 participates in (R)-pantoate binding. ATP is bound by residues V176 and 184-187 (MSSR).

The protein belongs to the pantothenate synthetase family. In terms of assembly, homodimer.

The protein localises to the cytoplasm. The enzyme catalyses (R)-pantoate + beta-alanine + ATP = (R)-pantothenate + AMP + diphosphate + H(+). It functions in the pathway cofactor biosynthesis; (R)-pantothenate biosynthesis; (R)-pantothenate from (R)-pantoate and beta-alanine: step 1/1. Its function is as follows. Catalyzes the condensation of pantoate with beta-alanine in an ATP-dependent reaction via a pantoyl-adenylate intermediate. The polypeptide is Pantothenate synthetase (Caldicellulosiruptor saccharolyticus (strain ATCC 43494 / DSM 8903 / Tp8T 6331)).